The sequence spans 401 residues: Acetate kinase (401 aa).

Mg(2+) is bound at residue N9. Position 16 (K16) interacts with ATP. R88 is a substrate binding site. D147 acts as the Proton donor/acceptor in catalysis. ATP-binding positions include 207-211, 282-284, and 333-337; these read HLGNG, DCR, and GIGEN. E388 lines the Mg(2+) pocket.

Belongs to the acetokinase family. As to quaternary structure, homodimer. Mg(2+) serves as cofactor. Mn(2+) is required as a cofactor.

Its subcellular location is the cytoplasm. It catalyses the reaction acetate + ATP = acetyl phosphate + ADP. It functions in the pathway metabolic intermediate biosynthesis; acetyl-CoA biosynthesis; acetyl-CoA from acetate: step 1/2. Catalyzes the formation of acetyl phosphate from acetate and ATP. Can also catalyze the reverse reaction. The polypeptide is Acetate kinase (Haemophilus influenzae (strain PittGG)).